The primary structure comprises 975 residues: Lateral signaling target protein 2 homolog (975 aa).

2 disordered regions span residues 299–458 (PLGS…GTDE) and 504–523 (YGTA…PSTS). 4 stretches are compositionally biased toward low complexity: residues 302–352 (SSSI…TTNT), 365–376 (NNHNSNSNSSSN), 383–400 (TLRS…TPTA), and 408–429 (PSHS…PADW). The span at 430 to 458 (SDGDDEDEDDDDIDVDEEDPESSDDGTDE) shows a compositional bias: acidic residues. Residues serine 540 and serine 541 each carry the phosphoserine modification. Disordered stretches follow at residues 556–633 (EEHM…SSLS) and 740–891 (DNVF…SPPA). The span at 564 to 602 (GRHHRHHQSHHHHHHHRHSHQHQHRQPHPHRTTRSGRKR) shows a compositional bias: basic residues. Over residues 621–633 (LASGDTSAASSLS) the composition is skewed to low complexity. Polar residues predominate over residues 751-770 (ATGQRHSAGASMQRNNTIDL). Serine 796 carries the post-translational modification Phosphoserine. Composition is skewed to low complexity over residues 802 to 860 (AASS…PVSA) and 877 to 890 (PSSA…LSPP). The FYVE-type zinc-finger motif lies at 895–955 (DGKAPRCMAC…VCRDCYVREV (61 aa)). Residues cysteine 901, cysteine 904, cysteine 917, cysteine 920, cysteine 925, cysteine 928, cysteine 947, and cysteine 950 each coordinate Zn(2+).

This sequence belongs to the lst-2 family.

In terms of biological role, negative regulator of epidermal growth factor receptor (EGFR) signaling. In Drosophila sechellia (Fruit fly), this protein is Lateral signaling target protein 2 homolog.